Reading from the N-terminus, the 374-residue chain is 3-dehydroquinate synthase (374 aa).

This sequence belongs to the archaeal-type DHQ synthase family.

The enzyme catalyses 2-amino-2,3,7-trideoxy-D-lyxo-hept-6-ulosonate + NAD(+) + H2O = 3-dehydroquinate + NH4(+) + NADH + H(+). Its function is as follows. Catalyzes the oxidative deamination and cyclization of 2-amino-3,7-dideoxy-D-threo-hept-6-ulosonic acid (ADH) to yield 3-dehydroquinate (DHQ), which is fed into the canonical shikimic pathway of aromatic amino acid biosynthesis. The sequence is that of 3-dehydroquinate synthase from Methanothermobacter thermautotrophicus (strain ATCC 29096 / DSM 1053 / JCM 10044 / NBRC 100330 / Delta H) (Methanobacterium thermoautotrophicum).